The sequence spans 314 residues: Thymidylate synthase (314 aa).

Residues Arg-21 and 176 to 177 contribute to the dUMP site; that span reads RR. Cys-196 (nucleophile) is an active-site residue. DUMP contacts are provided by residues 216 to 219, Asn-227, and 257 to 259; these read RSAD and HLY. Asp-219 contributes to the (6R)-5,10-methylene-5,6,7,8-tetrahydrofolate binding site. Ser-313 contributes to the (6R)-5,10-methylene-5,6,7,8-tetrahydrofolate binding site.

Belongs to the thymidylate synthase family. Bacterial-type ThyA subfamily. In terms of assembly, homodimer.

It localises to the cytoplasm. It carries out the reaction dUMP + (6R)-5,10-methylene-5,6,7,8-tetrahydrofolate = 7,8-dihydrofolate + dTMP. It participates in pyrimidine metabolism; dTTP biosynthesis. Its function is as follows. Catalyzes the reductive methylation of 2'-deoxyuridine-5'-monophosphate (dUMP) to 2'-deoxythymidine-5'-monophosphate (dTMP) while utilizing 5,10-methylenetetrahydrofolate (mTHF) as the methyl donor and reductant in the reaction, yielding dihydrofolate (DHF) as a by-product. This enzymatic reaction provides an intracellular de novo source of dTMP, an essential precursor for DNA biosynthesis. This chain is Thymidylate synthase, found in Listeria monocytogenes serotype 4b (strain CLIP80459).